We begin with the raw amino-acid sequence, 614 residues long: Vitamin B12 transporter BtuB (614 aa).

An N-terminal signal peptide occupies residues 1–20 (MIKKATLLTAFSVTAFSAWA). A TonB box motif is present at residues 26-33 (DTLVVTAN). The 115-residue stretch at 38-152 (PRSAVLAPVT…IGGVVNIITT (115 aa)) folds into the TBDR plug domain. Residues Ser85, Asn92, and 110–111 (VS) each bind cyanocob(III)alamin. Positions 155–614 (NPGTELTAGW…EYTLSGSYTF (460 aa)) constitute a TBDR beta-barrel domain. Transmembrane regions (beta stranded) follow at residues 158-165 (TELTAGWG), 169-178 (YQNYDISTQQ), and 184-195 (TRATLIGDYEYT). Asp199, Gln211, Asp213, and Asp215 together coordinate Ca(2+). The next 2 beta stranded transmembrane spans lie at 217–227 (FLSKTLYGALE) and 232–248 (DRWS…NRTD). Ca(2+) contacts are provided by Tyr249 and Asp250. Residue Ala251 coordinates cyanocob(III)alamin. Asp261 contributes to the Ca(2+) binding site. Transmembrane regions (beta stranded) follow at residues 263-277 (RKLY…LHFN), 279-296 (ERIQ…KDYN), 309-325 (TLDE…NSVV), 328-337 (HGNVGAGVDW), 353-369 (YDQR…QQLG), 371-381 (FTLEAAARSDD), 385-400 (FGRH…WEFI), 403-417 (YRFI…KAPN), 434-443 (KSKQWEGAFE), 449-458 (VSWRISGYRN), 473-490 (YYNE…TANF), 494-509 (PLTH…ARNA), 517-529 (RRSK…QLDW), and 535-550 (DWGM…YDSD). Thr309 contributes to the cyanocob(III)alamin binding site. Residue Arg517 coordinates cyanocob(III)alamin. Tyr551 serves as a coordination point for cyanocob(III)alamin. The next 3 beta stranded transmembrane spans lie at 558–572 (TVKM…LTVA), 585–596 (IANLFDKDYETV), and 602–614 (AGRE…SYTF). The short motif at 597–614 (YGYQTAGREYTLSGSYTF) is the TonB C-terminal box element.

This sequence belongs to the TonB-dependent receptor family. BtuB (TC 1.B.14.3.1) subfamily.

It is found in the cell outer membrane. Functionally, involved in the active translocation of vitamin B12 (cyanocobalamin) across the outer membrane to the periplasmic space. It derives its energy for transport by interacting with the trans-periplasmic membrane protein TonB. This Salmonella typhimurium (strain LT2 / SGSC1412 / ATCC 700720) protein is Vitamin B12 transporter BtuB.